The sequence spans 256 residues: Triosephosphate isomerase (256 aa).

12–14 contacts substrate; it reads NWK. The active-site Electrophile is the His99. Catalysis depends on Glu169, which acts as the Proton acceptor. Substrate contacts are provided by residues Gly175, Ser214, and 235 to 236; that span reads GG.

Belongs to the triosephosphate isomerase family. As to quaternary structure, homodimer.

It is found in the cytoplasm. It catalyses the reaction D-glyceraldehyde 3-phosphate = dihydroxyacetone phosphate. It functions in the pathway carbohydrate biosynthesis; gluconeogenesis. Its pathway is carbohydrate degradation; glycolysis; D-glyceraldehyde 3-phosphate from glycerone phosphate: step 1/1. Involved in the gluconeogenesis. Catalyzes stereospecifically the conversion of dihydroxyacetone phosphate (DHAP) to D-glyceraldehyde-3-phosphate (G3P). In Rhizobium meliloti (strain 1021) (Ensifer meliloti), this protein is Triosephosphate isomerase.